Here is a 333-residue protein sequence, read N- to C-terminus: MLKHLSEKFIYYMAEYFFEFEKRKHYYKLANNLYNSYLKGKKFNRSLLKKVKEDLNLWIDNPNQIQVYSRFLNEVEKEGVKSFGEGLAIIPLINLYREVWRELEEEQNKVEKLREYILKLDSCEICTRGLEGEEFFNCLTQNVDFLTATHIANFFFEEEFLPLNEEIAQILNISKENYFEVIKKLKGANLKNLYGALYVLLQRDSVKVNHVKRLLGISREAELLKEAQYAWNTGDFYRAHEILEEVWGLFKNEEIKKCYRGLIRAAIALHRFKEGNPQSGANVVKQALLDMANCPDNFRGINLGEIRAYLEEVLGTKEIGNPPELKYNIKSEE.

Positions 94-122 (NLYREVWRELEEEQNKVEKLREYILKLDS) form a coiled coil.

This is an uncharacterized protein from Aquifex aeolicus (strain VF5).